A 106-amino-acid polypeptide reads, in one-letter code: Large ribosomal subunit protein uL22 (106 aa).

Belongs to the universal ribosomal protein uL22 family. In terms of assembly, part of the 50S ribosomal subunit.

Functionally, this protein binds specifically to 23S rRNA; its binding is stimulated by other ribosomal proteins, e.g. L4, L17, and L20. It is important during the early stages of 50S assembly. It makes multiple contacts with different domains of the 23S rRNA in the assembled 50S subunit and ribosome. In terms of biological role, the globular domain of the protein is located near the polypeptide exit tunnel on the outside of the subunit, while an extended beta-hairpin is found that lines the wall of the exit tunnel in the center of the 70S ribosome. The protein is Large ribosomal subunit protein uL22 of Nautilia profundicola (strain ATCC BAA-1463 / DSM 18972 / AmH).